The following is a 246-amino-acid chain: V-type proton ATPase subunit D 1 (246 aa).

The protein belongs to the V-ATPase D subunit family. V-ATPase is a heteromultimeric enzyme made up of two complexes: the ATP-hydrolytic V1 complex and the proton translocation V0 complex. The V1 complex consists of three catalytic AB heterodimers that form a heterohexamer, three peripheral stalks each consisting of EG heterodimers, one central rotor including subunits D and F, and the regulatory subunits C and H. The proton translocation complex V0 consists of the proton transport subunit a, a ring of proteolipid subunits c9c'', rotary subunit d, subunits e and f, and the accessory subunits VhaAC45 and ATP6AP2.

Subunit of the V1 complex of vacuolar(H+)-ATPase (V-ATPase), a multisubunit enzyme composed of a peripheral complex (V1) that hydrolyzes ATP and a membrane integral complex (V0) that translocates protons. V-ATPase is responsible for acidifying and maintaining the pH of intracellular compartments and in some cell types, is targeted to the plasma membrane, where it is responsible for acidifying the extracellular environment. This chain is V-type proton ATPase subunit D 1 (Vha36-1), found in Drosophila melanogaster (Fruit fly).